A 272-amino-acid chain; its full sequence is MTNVFTIDAFREEVKKKYAPVLIGLSDDVTVELKPLLKLGQKAREAVVEVFKEFADIPDLEEDDDDELVDEYSLQVCDIIAKAFRLIATKPKKLIAALDEEPDPRIRAELYAAVLNTWKRETQLGGSRALAELIDKFGGAILADLLQYYRVDLRDLFRDEDPLSPRFVLSLVLCLPKDGAFYAERRGGQQYRGWTEDRYALADIYDAIQAGNHILLLANRDPKKPKPKAPKSYPRPDDLEKTTPKPGSFAAMVVRAKKAARERREREEESAE.

The interval 219–272 (NRDPKKPKPKAPKSYPRPDDLEKTTPKPGSFAAMVVRAKKAARERREREEESAE) is disordered. Basic and acidic residues-rich tracts occupy residues 234–243 (PRPDDLEKTT) and 262–272 (ERREREEESAE).

The protein belongs to the L5likevirus tail assembly protein family. As to quaternary structure, interacts with tail assembly protein Gp24 and tape measure protein.

Its function is as follows. Promotes tail assembly by creating a scaffold for the tail tube proteins. The tail assembly proteins Gp24 and Gp25 would wrap the linear tape measure protein to create a tail assembly scaffold. It would allow polymerization of tail tube protein during which Gp24 and Gp25 are released and therefore are absent from the mature virion. The tail assembly protein Gp25 is produced by a rare -1 ribosomal frameshift. The ratio Gp24/Gp25 is important for proper tail assembly. The chain is Tail assembly protein Gp25 (25) from Mycobacterium phage L5 (Mycobacteriophage L5).